We begin with the raw amino-acid sequence, 490 residues long: uncharacterized protein (490 aa).

The chain crosses the membrane as a helical span at residues 27–47 (VYVFLTTIILLLSLISTLIII).

It localises to the membrane. This is an uncharacterized protein from Borreliella burgdorferi (strain ATCC 35210 / DSM 4680 / CIP 102532 / B31) (Borrelia burgdorferi).